We begin with the raw amino-acid sequence, 99 residues long: Citrate lyase acyl carrier protein (99 aa).

Serine 14 bears the O-(phosphoribosyl dephospho-coenzyme A)serine mark.

It belongs to the CitD family. Oligomer with a subunit composition of (alpha,beta,gamma)6.

The protein resides in the cytoplasm. In terms of biological role, covalent carrier of the coenzyme of citrate lyase. The protein is Citrate lyase acyl carrier protein of Edwardsiella ictaluri (strain 93-146).